The following is a 115-amino-acid chain: Ribonuclease P protein component (115 aa).

This sequence belongs to the RnpA family. Consists of a catalytic RNA component (M1 or rnpB) and a protein subunit.

It carries out the reaction Endonucleolytic cleavage of RNA, removing 5'-extranucleotides from tRNA precursor.. RNaseP catalyzes the removal of the 5'-leader sequence from pre-tRNA to produce the mature 5'-terminus. It can also cleave other RNA substrates such as 4.5S RNA. The protein component plays an auxiliary but essential role in vivo by binding to the 5'-leader sequence and broadening the substrate specificity of the ribozyme. The protein is Ribonuclease P protein component of Bacillus cereus (strain ATCC 10987 / NRS 248).